The following is a 298-amino-acid chain: Tyrosine recombinase XerC (298 aa).

The Core-binding (CB) domain occupies 1–83 (MHAAVERFLH…ALSRFADHLV (83 aa)). The 180-residue stretch at 104-283 (HLPRPVDVDQ…DWQHLADAYD (180 aa)) folds into the Tyr recombinase domain. Catalysis depends on residues arginine 144, lysine 166, histidine 235, arginine 238, and histidine 261. Tyrosine 270 functions as the O-(3'-phospho-DNA)-tyrosine intermediate in the catalytic mechanism.

The protein belongs to the 'phage' integrase family. XerC subfamily. Forms a cyclic heterotetrameric complex composed of two molecules of XerC and two molecules of XerD.

Its subcellular location is the cytoplasm. Its function is as follows. Site-specific tyrosine recombinase, which acts by catalyzing the cutting and rejoining of the recombining DNA molecules. The XerC-XerD complex is essential to convert dimers of the bacterial chromosome into monomers to permit their segregation at cell division. It also contributes to the segregational stability of plasmids. The chain is Tyrosine recombinase XerC from Chromohalobacter salexigens (strain ATCC BAA-138 / DSM 3043 / CIP 106854 / NCIMB 13768 / 1H11).